The following is a 340-amino-acid chain: DNA-directed RNA polymerase subunit alpha (340 aa).

The alpha N-terminal domain (alpha-NTD) stretch occupies residues 1–238 (MADTFVAKNW…EQLTVFVNFD (238 aa)). The alpha C-terminal domain (alpha-CTD) stretch occupies residues 253-340 (AKLNENLFRS…QAPAPAQPKA (88 aa)).

This sequence belongs to the RNA polymerase alpha chain family. In terms of assembly, homodimer. The RNAP catalytic core consists of 2 alpha, 1 beta, 1 beta' and 1 omega subunit. When a sigma factor is associated with the core the holoenzyme is formed, which can initiate transcription.

The catalysed reaction is RNA(n) + a ribonucleoside 5'-triphosphate = RNA(n+1) + diphosphate. DNA-dependent RNA polymerase catalyzes the transcription of DNA into RNA using the four ribonucleoside triphosphates as substrates. This Myxococcus xanthus (strain DK1622) protein is DNA-directed RNA polymerase subunit alpha.